Here is a 336-residue protein sequence, read N- to C-terminus: Fructose-1,6-bisphosphatase class 1 (336 aa).

Mg(2+) contacts are provided by E92, D115, L117, and D118. Substrate-binding positions include 118–121 (DGSS), N211, Y244, 262–264 (YLY), and K274. E280 is a Mg(2+) binding site.

This sequence belongs to the FBPase class 1 family. Homotetramer. Mg(2+) is required as a cofactor.

The protein resides in the cytoplasm. It carries out the reaction beta-D-fructose 1,6-bisphosphate + H2O = beta-D-fructose 6-phosphate + phosphate. The protein operates within carbohydrate biosynthesis; gluconeogenesis. This is Fructose-1,6-bisphosphatase class 1 from Vibrio cholerae serotype O1 (strain ATCC 39315 / El Tor Inaba N16961).